Reading from the N-terminus, the 1401-residue chain is Condensin complex subunit 1 (1401 aa).

The segment at 1 to 603 (MAPQMYEFHL…TVCKNKPNMS (603 aa)) is interactions with SMC2 and SMC4. A phosphoserine mark is found at Ser20 and Ser585. The segment covering 576 to 596 (STQEKNPRESTGNMVTGQTVC) has biased composition (polar residues). Disordered stretches follow at residues 576–611 (STQE…SRGN), 956–978 (REEQ…TTME), and 1303–1401 (LEIG…RHRS). Basic and acidic residues predominate over residues 956–971 (REEQEHKTKDPKEKNT). Over residues 1308–1336 (AGSQRAPSAKKPSTGSRYQPLASTASDND) the composition is skewed to polar residues. Phosphoserine is present on residues Ser1310, Ser1315, and Ser1330. Residue Thr1331 is modified to Phosphothreonine. Ser1333 bears the Phosphoserine mark. A Phosphothreonine modification is found at Thr1339. Residues 1342–1362 (PRRTTRRHPNTQQRASKKKPK) carry the Bipartite nuclear localization signal motif. The span at 1345-1362 (TTRRHPNTQQRASKKKPK) shows a compositional bias: basic residues. Phosphoserine occurs at positions 1366, 1367, 1370, 1371, and 1376. Over residues 1369–1382 (ESSEEDLSAEMTED) the composition is skewed to acidic residues. Phosphothreonine; by CDK1 occurs at positions 1384 and 1389. Ser1395 is modified (phosphoserine).

The protein belongs to the CND1 (condensin subunit 1) family. As to quaternary structure, component of the condensin complex, which contains the SMC2 and SMC4 heterodimer, and three non SMC subunits that probably regulate the complex: NCAPH/BRRN1, NCAPD2/CAPD2 and NCAPG. Interacts with histones H1 and H3. Post-translationally, phosphorylated by CDK1. Its phosphorylation, as well as that of NCAPH and NCAPG subunits, activates the condensin complex and is required for chromosome condensation.

The protein localises to the nucleus. It localises to the cytoplasm. The protein resides in the chromosome. Regulatory subunit of the condensin complex, a complex required for conversion of interphase chromatin into mitotic-like condense chromosomes. The condensin complex probably introduces positive supercoils into relaxed DNA in the presence of type I topoisomerases and converts nicked DNA into positive knotted forms in the presence of type II topoisomerases. May target the condensin complex to DNA via its C-terminal domain. May promote the resolution of double-strand DNA catenanes (intertwines) between sister chromatids. Condensin-mediated compaction likely increases tension in catenated sister chromatids, providing directionality for type II topoisomerase-mediated strand exchanges toward chromatid decatenation. Required for decatenation of non-centromeric ultrafine DNA bridges during anaphase. Early in neurogenesis, may play an essential role to ensure accurate mitotic chromosome condensation in neuron stem cells, ultimately affecting neuron pool and cortex size. This is Condensin complex subunit 1 from Homo sapiens (Human).